A 153-amino-acid chain; its full sequence is MKCPFCNNINTQVKDSRAIEDDILIRRRRICLVCNSRFTTIEKLLLRSFMVIKKNGETEPFNKQKLLSSILIATKKRPVSHEGINVMVNNIFYELEGKKENAVPTDVIGKMVMDNLFKLDKVAYVRFASVYMNFKNINDFSNIIAKIINEQIL.

The segment at 3-34 (CPFCNNINTQVKDSRAIEDDILIRRRRICLVC) is a zinc-finger region. The region spanning 49-139 (FMVIKKNGET…VYMNFKNIND (91 aa)) is the ATP-cone domain.

The protein belongs to the NrdR family. It depends on Zn(2+) as a cofactor.

Its function is as follows. Negatively regulates transcription of bacterial ribonucleotide reductase nrd genes and operons by binding to NrdR-boxes. In Ehrlichia canis (strain Jake), this protein is Transcriptional repressor NrdR.